Reading from the N-terminus, the 290-residue chain is 2-hydroxy-6-oxo-6-(2'-aminophenyl)hexa-2,4-dienoic acid hydrolase (290 aa).

Active-site residues include serine 114, aspartate 233, and histidine 261.

This sequence belongs to the DmpD/TodF/XylF esterase family. In terms of assembly, homodimer.

The enzyme catalyses (2E,4E)-6-(2-aminophenyl)-2-hydroxy-6-oxohexa-2,4-dienoate + H2O = (2E)-2-hydroxypenta-2,4-dienoate + anthranilate + H(+). It participates in xenobiotic degradation; carbazole degradation. Involved in the degradation of carbazole, a toxic N-heterocyclic aromatic compound containing dibenzopyrrole system. Catalyzes the hydrolytic cleavage of a carbon-carbon bond of 2-hydroxy-6-oxo-6-(2'-aminophenyl)hexa-2,4-dienoic acid (HOPDA) to yield anthranilate. CarC is specific for 2-hydroxy-6-oxo-6-phenylhexa-2,4-dienoic acid (6-phenyl-HODA), and has little activity toward 2-hydroxy-6-oxohepta-2,4-dienoic acid and 2-hydroxymuconic semialdehyde. The effect of the presence of an amino group or hydroxyl group at the 2'-position of phenyl moiety of 6-phenyl-HODA on the enzyme activity is found to be small. This chain is 2-hydroxy-6-oxo-6-(2'-aminophenyl)hexa-2,4-dienoic acid hydrolase (carC), found in Metapseudomonas resinovorans (Pseudomonas resinovorans).